The primary structure comprises 618 residues: Rho guanine nucleotide exchange factor 25 (618 aa).

2 disordered regions span residues 26–63 (CAVPGQEGPPERDPLGPGSTKTESDCIEEDQTGQREPE) and 169–193 (GPGDKAQPAEEETLSQAPKNEEEQK). The DH domain maps to 199-375 (RSMFVLGELV…CFVPKRCNDM (177 aa)). Residues 317-338 (LGHRLQLNDLLIKPVQRIMKYQ) form an important for binding to Rho GTPases region. The PH domain maps to 387 to 505 (KLTAQGKLLG…WIKQVAQILE (119 aa)). Residues 506 to 532 (SQRDFLNALQSPIEYQRRESQTNSLGR) form a sufficient to bind activated GNAQ region. 2 disordered regions span residues 521 to 556 (QRRESQTNSLGRPGGPWVGSPGRMRPGDLAQASMHT) and 584 to 604 (ALSDTPQTPHDSPALPTVNTP). Polar residues predominate over residues 584–593 (ALSDTPQTPH).

In terms of assembly, interacts with activated GNAQ and GNA11. Interacts (via the DH domain) with POPDC1 (via the C-terminus cytoplasmic tail). Interacts with RHOA, CDC42 and RAC1. Highly expressed in excitable tissues, such as brain, heart and muscle. Elevated expression in hippocampus and cerebellum.

The protein localises to the cytoplasm. It localises to the myofibril. It is found in the sarcomere. Its subcellular location is the cell membrane. Its function is as follows. May play a role in actin cytoskeleton reorganization in different tissues since its activation induces formation of actin stress fibers. It works as a guanine nucleotide exchange factor for Rho family of small GTPases. Links specifically G alpha q/11-coupled receptors to RHOA activation. May be an important regulator of processes involved in axon and dendrite formation. In neurons seems to be an exchange factor primarily for RAC1. Involved in skeletal myogenesis. The sequence is that of Rho guanine nucleotide exchange factor 25 (Arhgef25) from Mus musculus (Mouse).